Consider the following 300-residue polypeptide: D-alanine--D-alanine ligase (300 aa).

The ATP-grasp domain maps to 99-293 (KKILKYANIN…FAELLNSIVK (195 aa)). 126–181 (IEKIGYPVFVKPNSGGSSVATNLVKDKEGIKEAVELALKYDKEVMIENYTKGEEIT) contributes to the ATP binding site. The Mg(2+) site is built by Asp248, Glu260, and Asn262.

It belongs to the D-alanine--D-alanine ligase family. Mg(2+) is required as a cofactor. It depends on Mn(2+) as a cofactor.

Its subcellular location is the cytoplasm. The catalysed reaction is 2 D-alanine + ATP = D-alanyl-D-alanine + ADP + phosphate + H(+). It participates in cell wall biogenesis; peptidoglycan biosynthesis. In terms of biological role, cell wall formation. The protein is D-alanine--D-alanine ligase of Clostridium botulinum (strain ATCC 19397 / Type A).